Consider the following 530-residue polypeptide: Protein transport protein SEC9 (530 aa).

The interval 1–274 (MGIKKMFQKK…QPANDYNLDL (274 aa)) is disordered. Residues 8-22 (QKKEPTEQEIREELS) show a composition bias toward basic and acidic residues. Composition is skewed to low complexity over residues 61 to 100 (NPYA…NNGG) and 122 to 141 (GSSP…SSNP). The span at 142–160 (YGNNNGSRSSQNTSSPYAK) shows a compositional bias: polar residues. A compositionally biased stretch (low complexity) spans 161 to 202 (STNNSSYSNSPYSGSTVNNGNRGGHSNNSNSSAGGNPYAAGG). Polar residues-rich tracts occupy residues 203–228 (RSSQ…RQTQ) and 258–268 (RNQQSSQQPAN). 2 consecutive t-SNARE coiled-coil homology domains span residues 313 to 375 (KFVK…VKEL) and 467 to 529 (DDME…LNNI).

This sequence belongs to the SNAP-25 family.

Its subcellular location is the membrane. Late secretory t-SNARE protein required for secretion and proper cytokinesis. Plays an important role in the secretion of virulence-associated extracellular enzymes and vesicle-mediated polarized hyphal growth. The protein is Protein transport protein SEC9 (SEC9) of Candida albicans (strain SC5314 / ATCC MYA-2876) (Yeast).